Consider the following 476-residue polypeptide: MATPANQTGRITQVIGAVVDVQFEGHLPAILNAIETKNGDNRLVLEVAQHLGESTVRTIAMDTTEGLVRGQEVTDTGNPIMVPVGVGTLGRIMNVIGEPVDEQGPVANEGLRPIHAEAPTYTDQSTEAEILVTGIKVVDLLAPYAKGGKIGLFGGAGVGKTVLIQELINNVAKAHGGYSVFAGVGERTREGNDLYHEFIESGVNKKGGGEGSKCALVYGQMNEPPGARARVALSGLTVAEHFRDQGQDVLFFVDNIFRFTQAGSEVSALLGRIPSAVGYQPTLATDMGALQERITTTHKGSITSVQAIYVPADDLTDPAPATSFAHLDATTVLNRAISEKGIYPAVDPLDSTSRMLSPLIVGEEHYQTARMVQQVLQKYKSLQDIIAILGMDELSEEDKLAVARARKIERFLSQPFFVAEIFTGSPGKFVDLADTIKGFRAICEGKYDHLPEAAFYMVGAIEEAVEKGKKLAAEAA.

ATP is bound at residue 154-161 (GGAGVGKT).

This sequence belongs to the ATPase alpha/beta chains family. In terms of assembly, F-type ATPases have 2 components, CF(1) - the catalytic core - and CF(0) - the membrane proton channel. CF(1) has five subunits: alpha(3), beta(3), gamma(1), delta(1), epsilon(1). CF(0) has four main subunits: a(1), b(1), b'(1) and c(9-12).

The protein resides in the cell inner membrane. It carries out the reaction ATP + H2O + 4 H(+)(in) = ADP + phosphate + 5 H(+)(out). Produces ATP from ADP in the presence of a proton gradient across the membrane. The catalytic sites are hosted primarily by the beta subunits. This chain is ATP synthase subunit beta, found in Rhodopseudomonas palustris (strain HaA2).